The chain runs to 296 residues: Sulfate adenylyltransferase subunit 2 (296 aa).

Belongs to the PAPS reductase family. CysD subfamily. Heterodimer composed of CysD, the smaller subunit, and CysN.

The enzyme catalyses sulfate + ATP + H(+) = adenosine 5'-phosphosulfate + diphosphate. Its pathway is sulfur metabolism; hydrogen sulfide biosynthesis; sulfite from sulfate: step 1/3. Its function is as follows. With CysN forms the ATP sulfurylase (ATPS) that catalyzes the adenylation of sulfate producing adenosine 5'-phosphosulfate (APS) and diphosphate, the first enzymatic step in sulfur assimilation pathway. APS synthesis involves the formation of a high-energy phosphoric-sulfuric acid anhydride bond driven by GTP hydrolysis by CysN coupled to ATP hydrolysis by CysD. This is Sulfate adenylyltransferase subunit 2 from Rhodospirillum rubrum (strain ATCC 11170 / ATH 1.1.1 / DSM 467 / LMG 4362 / NCIMB 8255 / S1).